Here is a 409-residue protein sequence, read N- to C-terminus: Arginine biosynthesis bifunctional protein ArgJ (409 aa).

Positions 156, 182, 193, 280, 404, and 409 each coordinate substrate. Thr193 (nucleophile) is an active-site residue.

Belongs to the ArgJ family. In terms of assembly, heterotetramer of two alpha and two beta chains.

Its subcellular location is the cytoplasm. The enzyme catalyses N(2)-acetyl-L-ornithine + L-glutamate = N-acetyl-L-glutamate + L-ornithine. It carries out the reaction L-glutamate + acetyl-CoA = N-acetyl-L-glutamate + CoA + H(+). It participates in amino-acid biosynthesis; L-arginine biosynthesis; L-ornithine and N-acetyl-L-glutamate from L-glutamate and N(2)-acetyl-L-ornithine (cyclic): step 1/1. Its pathway is amino-acid biosynthesis; L-arginine biosynthesis; N(2)-acetyl-L-ornithine from L-glutamate: step 1/4. Functionally, catalyzes two activities which are involved in the cyclic version of arginine biosynthesis: the synthesis of N-acetylglutamate from glutamate and acetyl-CoA as the acetyl donor, and of ornithine by transacetylation between N(2)-acetylornithine and glutamate. In Ralstonia nicotianae (strain ATCC BAA-1114 / GMI1000) (Ralstonia solanacearum), this protein is Arginine biosynthesis bifunctional protein ArgJ.